Reading from the N-terminus, the 1230-residue chain is SAM and SH3 domain-containing protein 1 (1230 aa).

Residues 1 to 10 (MEEDAGAASP) show a composition bias toward low complexity. A disordered region spans residues 1–30 (MEEDAGAASPAPEPEPEVDPARELEPEAGV). Ser83 and Ser241 each carry phosphoserine. Disordered stretches follow at residues 211 to 249 (RQSSTLDPADWPDGSYPTLDGSSTCNSREQSDDETEDSV) and 275 to 337 (KKPS…LDTW). Positions 275-297 (KKPSAEGGEEHVFENSPVQDERS) are enriched in basic and acidic residues. Residues 324–336 (SLTPSPSSSSLDT) show a composition bias toward low complexity. Ser400 carries the phosphoserine modification. 3 disordered regions span residues 439-566 (PRIS…YDTD), 610-633 (EEKPKRPTRRRKKGRPSQPKSVED), and 705-792 (VDNQ…KSCD). Over residues 461 to 470 (KYSSPVSEQD) the composition is skewed to polar residues. A compositionally biased stretch (basic and acidic residues) spans 485–494 (PDSEHVDKPK). Over residues 498–516 (GGSVESLRSSLSGQSSMSG) the composition is skewed to low complexity. A compositionally biased stretch (polar residues) spans 517–529 (QTVSTTDSSTSNR). The SH3 domain occupies 547-608 (PFCGRARVHT…KFIYVDVLNE (62 aa)). A compositionally biased stretch (basic residues) spans 615-624 (RPTRRRKKGR). In terms of domain architecture, SAM 1 spans 626–690 (SQPKSVEDLL…LTAVELLQEY (65 aa)). Residues 737–758 (VLSTKSSTESNLKSFTRSQPGN) show a composition bias toward polar residues. Residues 768 to 779 (GEVRKQGEEGRL) are compositionally biased toward basic and acidic residues. Phosphoserine is present on residues Ser813 and Ser831. 2 disordered regions span residues 818–875 (EGPE…LPRG) and 915–1045 (PPQC…PWLA). A required for interaction with TRAF6 region spans residues 844 to 852 (NVPTEMPET). Positions 852-868 (TCSQNVPEVPQKTSACT) are enriched in polar residues. Basic and acidic residues predominate over residues 940–956 (GLRKGHDHHPLGTKEGV). The segment covering 962-972 (APETRTQSRHP) has biased composition (polar residues). The segment covering 1008-1019 (SPASPVSPSDCP) has biased composition (low complexity). Residues 1160–1224 (GCVASMSDWL…ITAARLFKLP (65 aa)) enclose the SAM 2 domain.

Interacts with GNAS. Interacts with IQGAP1. Interacts with TRAF6 (via C-terminus); the interaction is LPS-dependent. Interacts with MAP3K7, CHUK and IKBKB. In terms of tissue distribution, expressed in the microvascular endothelium of various organs, as well as in parenchymal cells. Expressed in the endothelium but not lymphoid cells of spleen and thymus.

Its subcellular location is the cytoplasm. Functionally, is a positive regulator of NF-kappa-B signaling downstream of TLR4 activation. It acts as a scaffold molecule to assemble a molecular complex that includes TRAF6, MAP3K7, CHUK and IKBKB, thereby facilitating NF-kappa-B signaling activation. Regulates TRAF6 and MAP3K7 ubiquitination. Involved in the regulation of cell mobility. Regulates lipolysaccharide (LPS)-induced endothelial cell migration. Is involved in the regulation of skin pigmentation through the control of melanocyte migration in the epidermis. The sequence is that of SAM and SH3 domain-containing protein 1 (Sash1) from Mus musculus (Mouse).